Consider the following 400-residue polypeptide: tRNA-specific adenosine deaminase TAD3 (400 aa).

One can recognise a CMP/dCMP-type deaminase domain in the interval Ser-250–Phe-385. His-257 is a Zn(2+) binding site. The segment at Leu-273–Ser-320 is disordered. Residues Asn-309 to Ser-320 show a composition bias toward basic and acidic residues. Cys-339 and Cys-342 together coordinate Zn(2+).

The protein belongs to the cytidine and deoxycytidylate deaminase family. ADAT3 subfamily. Interacts with TAD2.

It localises to the nucleus. The protein localises to the cytoplasm. The catalysed reaction is adenosine(34) in tRNA + H2O + H(+) = inosine(34) in tRNA + NH4(+). Involved in RNA editing. Catalyzes the specific deamination of adenosine-34 in several cytosolic tRNA species. Generates inosine at the wobble position of the anticodon loop. This chain is tRNA-specific adenosine deaminase TAD3, found in Arabidopsis thaliana (Mouse-ear cress).